We begin with the raw amino-acid sequence, 387 residues long: L-aspartate:5-guanidino-3-methyl-2-oxopentanoate transaminase (387 aa).

Lys-237 carries the N6-(pyridoxal phosphate)lysine modification.

The protein belongs to the class-I pyridoxal-phosphate-dependent aminotransferase family. Pyridoxal 5'-phosphate serves as cofactor.

The catalysed reaction is (3R)-5-guanidino-3-methyl-2-oxopentanoate + L-aspartate = (3R)-3-methyl-L-arginine + oxaloacetate. The protein operates within antibiotic biosynthesis. Its function is as follows. Aminotransferase involved in the formation of the rare amino acid 3-methylarginine (MeArg), which is used as a potent antibiotic against the closely related soybean pathogen P.syringae pv. glycinea. Probably catalyzes transamination from the donor L-aspartate to 5-guanidino-3-methyl-2-oxopentanoic acid, generating 3-methylarginine. In Pseudomonas syringae pv. syringae, this protein is L-aspartate:5-guanidino-3-methyl-2-oxopentanoate transaminase.